The following is a 900-amino-acid chain: MTKMMTPAMCQYYEAKQAYPDTLIFFRMGDFYESFGEDAKTIAKELEITLTARGKDKSGERMPLAGIPYHAIDTYLPRLINKGYKVAICEQLEDPKKAKGIVKRGVVRVVTPGTAIDSSMFSDASNNYLMAVAGREIGKPGKNAENEFEIGVSFLDISTGEFLTTQFRDSENFEKLLSELARMRPSECILPSSLYENPALAERLRAQTIVQEFAPDISGAKEAGERLKNHFRVATLEGMGCENLDFAVYSAWAALEYAQTTQMRELTHINTLRTYSNSEFMILDSVTLRNLEIVKNVRDEGDENSLYRILNHTKTPMGSRALKKWLLKPLLSVEKINYRLDAVEELTAKPLLRYDLRNWLSDVRDIERLVGRVVYGNSNARDLVALKKSLEALPPVRDSLLENIESTILNDIAVGLASFSELENLAEMIDRAIVDEPPISVREGGMIKSGYNAELDELKDIASNSRQWIANFQQKERERSGIKSLKVGYNKIFGYYIEVTNANSSQVPEDYIRKQTMANAERFFTPELKEKESLILTANEKAIALEYEIFTEILQTLSAHSRELQETAERIGTLDVLTDLAEVAENNNYIRPQLTDDCKILIRDGRHPVVENTVHGGFVPNDTEMDCKENQFLLVTGPNMAGKSTYMRQTALIAIMAQVGSFVPASYASIGIIDQVFTRIGAFDDLASGQSTFMVEMVELANILNNASPRSLVLLDEIGRGTSTYDGYSIAKAVVEFLHNRGKVGVRALFATHYHQLTALEEKLKRVKNYHVAVKEEGHELVFLRKIVPGATDRSYGIQVARLAGVPEKVIERANEILKELERENVLEEVEDSKNGKKRKSKATARYTQMMLFDPGDSGGNTAKVNRPSPVETVLKKLNVDEMTPIEALNKLHELKRLLN.

Position 637 to 644 (637 to 644 (GPNMAGKS)) interacts with ATP.

It belongs to the DNA mismatch repair MutS family.

In terms of biological role, this protein is involved in the repair of mismatches in DNA. It is possible that it carries out the mismatch recognition step. This protein has a weak ATPase activity. The protein is DNA mismatch repair protein MutS of Methanosarcina barkeri (strain Fusaro / DSM 804).